The following is a 225-amino-acid chain: 2-C-methyl-D-erythritol 4-phosphate cytidylyltransferase (225 aa).

Belongs to the IspD/TarI cytidylyltransferase family. IspD subfamily.

It catalyses the reaction 2-C-methyl-D-erythritol 4-phosphate + CTP + H(+) = 4-CDP-2-C-methyl-D-erythritol + diphosphate. Its pathway is isoprenoid biosynthesis; isopentenyl diphosphate biosynthesis via DXP pathway; isopentenyl diphosphate from 1-deoxy-D-xylulose 5-phosphate: step 2/6. In terms of biological role, catalyzes the formation of 4-diphosphocytidyl-2-C-methyl-D-erythritol from CTP and 2-C-methyl-D-erythritol 4-phosphate (MEP). In Haemophilus influenzae (strain PittEE), this protein is 2-C-methyl-D-erythritol 4-phosphate cytidylyltransferase.